A 179-amino-acid polypeptide reads, in one-letter code: Early E3 20.1 kDa glycoprotein (179 aa).

N-linked (GlcNAc...) asparagine; by host glycans are attached at residues N29, N57, N70, N75, and N123.

This sequence belongs to the adenoviridae E3_20 family.

E3 proteins seem to be dispensable for virus growth in tissue culture cells. They are potentially important for virus growth under special conditions; E3 region may help adenoviruses to evade the immune surveillance of the host. The protein is Early E3 20.1 kDa glycoprotein of Homo sapiens (Human).